Consider the following 256-residue polypeptide: Enoyl-[acyl-carrier-protein] reductase [NADH] FabI (256 aa).

Residues G13, 19-20 (SI), 66-67 (DV), and I94 contribute to the NAD(+) site. A97 serves as a coordination point for substrate. Residues Y147 and Y157 each act as proton acceptor in the active site. NAD(+) contacts are provided by residues K164 and 193–197 (IRTLS).

This sequence belongs to the short-chain dehydrogenases/reductases (SDR) family. FabI subfamily. Homotetramer.

It carries out the reaction a 2,3-saturated acyl-[ACP] + NAD(+) = a (2E)-enoyl-[ACP] + NADH + H(+). The protein operates within lipid metabolism; fatty acid biosynthesis. In terms of biological role, catalyzes the reduction of a carbon-carbon double bond in an enoyl moiety that is covalently linked to an acyl carrier protein (ACP). Involved in the elongation cycle of fatty acid which are used in the lipid metabolism. The protein is Enoyl-[acyl-carrier-protein] reductase [NADH] FabI (fabI) of Bacillus cereus (strain ATCC 14579 / DSM 31 / CCUG 7414 / JCM 2152 / NBRC 15305 / NCIMB 9373 / NCTC 2599 / NRRL B-3711).